The following is a 503-amino-acid chain: Cysteine--tRNA ligase (503 aa).

C31 is a binding site for Zn(2+). The 'HIGH' region motif lies at 33–43; the sequence is PTVYDYAHIGN. Zn(2+) is bound by residues C225, H264, and E268. The short motif at 297–301 is the 'KMSKS' region element; it reads KMSKS. K300 lines the ATP pocket.

This sequence belongs to the class-I aminoacyl-tRNA synthetase family. As to quaternary structure, monomer. Requires Zn(2+) as cofactor.

Its subcellular location is the cytoplasm. The catalysed reaction is tRNA(Cys) + L-cysteine + ATP = L-cysteinyl-tRNA(Cys) + AMP + diphosphate. The protein is Cysteine--tRNA ligase of Bartonella tribocorum (strain CIP 105476 / IBS 506).